A 779-amino-acid polypeptide reads, in one-letter code: Neutral ceramidase 1 (779 aa).

Ser-350 (nucleophile) is an active-site residue. Asn-368, Asn-432, and Asn-667 each carry an N-linked (GlcNAc...) asparagine glycan.

This sequence belongs to the neutral ceramidase family. As to expression, mostly expressed in stems, leaves, roots and siliques, and, to a lower extent, in flowers.

Its subcellular location is the secreted. It localises to the endoplasmic reticulum. The protein localises to the golgi apparatus. It carries out the reaction an N-acylsphing-4-enine + H2O = sphing-4-enine + a fatty acid. Its function is as follows. Hydrolyzes the sphingolipid ceramide into sphingosine and free fatty acid. Regulates sphingolipid homeostasis. Promotes oxidative stress resistance. The sequence is that of Neutral ceramidase 1 from Arabidopsis thaliana (Mouse-ear cress).